Reading from the N-terminus, the 141-residue chain is Nucleoside diphosphate kinase (141 aa).

6 residues coordinate ATP: Lys-11, Phe-59, Arg-87, Thr-93, Arg-104, and Asn-114. Catalysis depends on His-117, which acts as the Pros-phosphohistidine intermediate.

The protein belongs to the NDK family. Homotetramer. The cofactor is Mg(2+).

It is found in the cytoplasm. It catalyses the reaction a 2'-deoxyribonucleoside 5'-diphosphate + ATP = a 2'-deoxyribonucleoside 5'-triphosphate + ADP. The catalysed reaction is a ribonucleoside 5'-diphosphate + ATP = a ribonucleoside 5'-triphosphate + ADP. Functionally, major role in the synthesis of nucleoside triphosphates other than ATP. The ATP gamma phosphate is transferred to the NDP beta phosphate via a ping-pong mechanism, using a phosphorylated active-site intermediate. In Cupriavidus taiwanensis (strain DSM 17343 / BCRC 17206 / CCUG 44338 / CIP 107171 / LMG 19424 / R1) (Ralstonia taiwanensis (strain LMG 19424)), this protein is Nucleoside diphosphate kinase.